We begin with the raw amino-acid sequence, 305 residues long: Oxygen-dependent coproporphyrinogen-III oxidase (305 aa).

Residue serine 93 coordinates substrate. A divalent metal cation contacts are provided by histidine 97 and histidine 107. Histidine 107 acts as the Proton donor in catalysis. 109 to 111 (NVR) is a substrate binding site. Histidine 146 and histidine 176 together coordinate a divalent metal cation. The segment at 241 to 276 (YVEFNLVFDRGTLFGLQSGGRTESILMSLPPQVRWG) is important for dimerization. Residue 259–261 (GGR) participates in substrate binding.

The protein belongs to the aerobic coproporphyrinogen-III oxidase family. As to quaternary structure, homodimer. Requires a divalent metal cation as cofactor.

It localises to the cytoplasm. The catalysed reaction is coproporphyrinogen III + O2 + 2 H(+) = protoporphyrinogen IX + 2 CO2 + 2 H2O. Its pathway is porphyrin-containing compound metabolism; protoporphyrin-IX biosynthesis; protoporphyrinogen-IX from coproporphyrinogen-III (O2 route): step 1/1. In terms of biological role, involved in the heme biosynthesis. Catalyzes the aerobic oxidative decarboxylation of propionate groups of rings A and B of coproporphyrinogen-III to yield the vinyl groups in protoporphyrinogen-IX. This is Oxygen-dependent coproporphyrinogen-III oxidase from Pseudomonas aeruginosa (strain LESB58).